The primary structure comprises 428 residues: Elongation factor 1-alpha (428 aa).

Positions 5–225 constitute a tr-type G domain; it reads KPILNVAFIG…DAFQPPEKPT (221 aa). Residues 14–21 are G1; sequence GHVDAGKS. Position 14–21 (14–21) interacts with GTP; that stretch reads GHVDAGKS. S21 is a Mg(2+) binding site. Residues 70–74 form a G2 region; that stretch reads GVTID. Residues 91-94 are G3; the sequence is DCPG. Residues 91 to 95 and 149 to 152 contribute to the GTP site; these read DCPGH and NKMD. The G4 stretch occupies residues 149 to 152; the sequence is NKMD. The G5 stretch occupies residues 189–191; it reads ASL.

Belongs to the TRAFAC class translation factor GTPase superfamily. Classic translation factor GTPase family. EF-Tu/EF-1A subfamily.

The protein localises to the cytoplasm. The catalysed reaction is GTP + H2O = GDP + phosphate + H(+). In terms of biological role, GTP hydrolase that promotes the GTP-dependent binding of aminoacyl-tRNA to the A-site of ribosomes during protein biosynthesis. This is Elongation factor 1-alpha from Methanococcus maripaludis (strain C6 / ATCC BAA-1332).